The following is a 111-amino-acid chain: Cytochrome c (111 aa).

At Ala-1 the chain carries N-acetylalanine. Heme c contacts are provided by Cys-22, Cys-25, and His-26. The residue at position 80 (Lys-80) is an N6,N6,N6-trimethyllysine. Residue Met-88 coordinates heme c. Lys-94 bears the N6,N6,N6-trimethyllysine mark.

This sequence belongs to the cytochrome c family. In terms of processing, binds 1 heme c group covalently per subunit.

The protein localises to the mitochondrion intermembrane space. Electron carrier protein. The oxidized form of the cytochrome c heme group can accept an electron from the heme group of the cytochrome c1 subunit of cytochrome reductase. Cytochrome c then transfers this electron to the cytochrome oxidase complex, the final protein carrier in the mitochondrial electron-transport chain. The polypeptide is Cytochrome c (Brassica napus (Rape)).